The chain runs to 343 residues: MTKTMLRALKGETLPTPPIWLMRQAGRYLPEYRATRAQAGDFLSLCYTPDLAAEVTLQPIRRYGFDAAILFADILLLPQALGADLWFETGEGPRMSTITDMEGVTALKGRDDIHETLAPVYETCRILARELPKETTFIGFAGMPWTVATYMIAGRGSKDQAAAHKLKDTDRPAFEALMDRVTEATIEYLAKQVEAGCEVVKLFDSWAGSLKGQDFEDFAVAPAKRIVSELKARFPGLPVIAFPREAGEGYIGFAEKTGADCVAIDNSVSPEWAAEKVQAGRTCVQGNLDPKYMVTGGEELVQATKRVVEAFRNGPHIFNLGHGITPEADPENVTLLVETIRGK.

Residues 23 to 27 (RQAGR), Asp73, Tyr150, Ser205, and His322 each bind substrate.

Belongs to the uroporphyrinogen decarboxylase family. Homodimer.

The protein localises to the cytoplasm. It catalyses the reaction uroporphyrinogen III + 4 H(+) = coproporphyrinogen III + 4 CO2. The protein operates within porphyrin-containing compound metabolism; protoporphyrin-IX biosynthesis; coproporphyrinogen-III from 5-aminolevulinate: step 4/4. Its function is as follows. Catalyzes the decarboxylation of four acetate groups of uroporphyrinogen-III to yield coproporphyrinogen-III. The sequence is that of Uroporphyrinogen decarboxylase from Cereibacter sphaeroides (strain ATCC 17029 / ATH 2.4.9) (Rhodobacter sphaeroides).